Reading from the N-terminus, the 88-residue chain is Beta-insect excitatory toxin 1 (88 aa).

A signal peptide spans 1–18 (MKFLLLFLVVLPIMGVFG). The LCN-type CS-alpha/beta domain maps to 20–83 (KNGYAVDSSG…ISDTRKSYCD (64 aa)). Disulfide bonds link Cys-34–Cys-55, Cys-40–Cys-60, Cys-44–Cys-62, and Cys-56–Cys-82.

The protein belongs to the long (4 C-C) scorpion toxin superfamily. Sodium channel inhibitor family. Beta subfamily. As to expression, expressed by the venom gland.

It is found in the secreted. Functionally, excitatory insect beta-toxins induce a spastic paralysis. They bind voltage-independently at site-4 of sodium channels (Nav) and shift the voltage of activation toward more negative potentials thereby affecting sodium channel activation and promoting spontaneous and repetitive firing. This toxin is active only on insects. The protein is Beta-insect excitatory toxin 1 of Androctonus australis (Sahara scorpion).